The primary structure comprises 247 residues: Small ribosomal subunit protein uS2 (247 aa).

It belongs to the universal ribosomal protein uS2 family.

In Cupriavidus metallidurans (strain ATCC 43123 / DSM 2839 / NBRC 102507 / CH34) (Ralstonia metallidurans), this protein is Small ribosomal subunit protein uS2.